Consider the following 295-residue polypeptide: MQAVLNFPDLSPELFSISLFGMEFALRWYALAYIAGIVIAWRLAVLATRRAALWPANTPPMAPARIEDLLTWIILGVILGGRLGFVLFYQPAYYLANPTEILMVWQGGMAFHGGLLGVVIAAWLYSLRHNIPKLSLADLITHTVAPGLLLGRLANFINAELWGRPSDLPWAVIFPGPAAQACPGVVGLCARHPSQLYEAALEGLLLGTLLLWLVWRRGALKRPGLITGVFLAGYGLSRFVVEFFRQPDAQFVTPGNPLGLAWQVGEYGLTMGQLLSLPMIALGLWFVLRARAVPA.

4 helical membrane-spanning segments follow: residues 28-48 (WYAL…VLAT), 69-89 (LLTW…VLFY), 101-121 (ILMV…VVIA), and 131-151 (IPKL…LLLG). Arg152 lines the a 1,2-diacyl-sn-glycero-3-phospho-(1'-sn-glycerol) pocket. The next 3 membrane-spanning stretches (helical) occupy residues 195–215 (QLYE…WLVW), 224–244 (GLIT…VEFF), and 268–288 (GLTM…WFVL).

This sequence belongs to the Lgt family.

It localises to the cell inner membrane. It catalyses the reaction L-cysteinyl-[prolipoprotein] + a 1,2-diacyl-sn-glycero-3-phospho-(1'-sn-glycerol) = an S-1,2-diacyl-sn-glyceryl-L-cysteinyl-[prolipoprotein] + sn-glycerol 1-phosphate + H(+). It participates in protein modification; lipoprotein biosynthesis (diacylglyceryl transfer). Its function is as follows. Catalyzes the transfer of the diacylglyceryl group from phosphatidylglycerol to the sulfhydryl group of the N-terminal cysteine of a prolipoprotein, the first step in the formation of mature lipoproteins. This Ruegeria pomeroyi (strain ATCC 700808 / DSM 15171 / DSS-3) (Silicibacter pomeroyi) protein is Phosphatidylglycerol--prolipoprotein diacylglyceryl transferase.